We begin with the raw amino-acid sequence, 369 residues long: Protein-glutamate methylesterase/protein-glutamine glutaminase of group 3 operon (369 aa).

One can recognise a Response regulatory domain in the interval 11–128 (RVLIVDDSAA…DLERQEASIR (118 aa)). The residue at position 62 (D62) is a 4-aspartylphosphate. The segment at 136-168 (ATETTRRRSQPEPRPLAPGPKLTADEILPARPP) is disordered. The CheB-type methylesterase domain occupies 170–358 (PVPETMPVVC…LDRLAARIME (189 aa)). Active-site residues include S183, H209, and D305.

Belongs to the CheB family. In terms of processing, phosphorylated in vitro by CheA2, but not by CheA1. Phosphorylation of the N-terminal regulatory domain activates the methylesterase activity.

It is found in the cytoplasm. The enzyme catalyses [protein]-L-glutamate 5-O-methyl ester + H2O = L-glutamyl-[protein] + methanol + H(+). The catalysed reaction is L-glutaminyl-[protein] + H2O = L-glutamyl-[protein] + NH4(+). Functionally, involved in chemotaxis. Part of a chemotaxis signal transduction system that modulates chemotaxis in response to various stimuli. Catalyzes the demethylation of specific methylglutamate residues introduced into the chemoreceptors (methyl-accepting chemotaxis proteins or MCP) by CheR. Also mediates the irreversible deamidation of specific glutamine residues to glutamic acid. This chain is Protein-glutamate methylesterase/protein-glutamine glutaminase of group 3 operon (cheB3), found in Cereibacter sphaeroides (Rhodobacter sphaeroides).